Reading from the N-terminus, the 349-residue chain is Magnesium-protoporphyrin IX monomethyl ester [oxidative] cyclase (349 aa).

Low complexity predominate over residues 1–10 (MTATTATAPT). A disordered region spans residues 1–23 (MTATTATAPTMRGGGRNELPPHL).

This sequence belongs to the AcsF family. Fe cation is required as a cofactor.

It catalyses the reaction Mg-protoporphyrin IX 13-monomethyl ester + 3 NADPH + 3 O2 + 2 H(+) = 3,8-divinyl protochlorophyllide a + 3 NADP(+) + 5 H2O. The protein operates within porphyrin-containing compound metabolism; chlorophyll biosynthesis (light-independent). Functionally, catalyzes the formation of the isocyclic ring in chlorophyll biosynthesis. Mediates the cyclase reaction, which results in the formation of divinylprotochlorophyllide (Pchlide) characteristic of all chlorophylls from magnesium-protoporphyrin IX 13-monomethyl ester (MgPMME). The sequence is that of Magnesium-protoporphyrin IX monomethyl ester [oxidative] cyclase from Prochlorococcus marinus (strain MIT 9313).